Consider the following 310-residue polypeptide: Transaldolase (310 aa).

Lys124 (schiff-base intermediate with substrate) is an active-site residue.

The protein belongs to the transaldolase family. Type 1 subfamily. In terms of assembly, homodimer.

It localises to the cytoplasm. It catalyses the reaction D-sedoheptulose 7-phosphate + D-glyceraldehyde 3-phosphate = D-erythrose 4-phosphate + beta-D-fructose 6-phosphate. The protein operates within carbohydrate degradation; pentose phosphate pathway; D-glyceraldehyde 3-phosphate and beta-D-fructose 6-phosphate from D-ribose 5-phosphate and D-xylulose 5-phosphate (non-oxidative stage): step 2/3. Its function is as follows. Transaldolase is important for the balance of metabolites in the pentose-phosphate pathway. In Teredinibacter turnerae (strain ATCC 39867 / T7901), this protein is Transaldolase.